A 419-amino-acid polypeptide reads, in one-letter code: Tol-Pal system protein TolB (419 aa).

A signal peptide spans 1–19; the sequence is MFNRIISLFLLLFTGQVIA.

This sequence belongs to the TolB family. As to quaternary structure, the Tol-Pal system is composed of five core proteins: the inner membrane proteins TolA, TolQ and TolR, the periplasmic protein TolB and the outer membrane protein Pal. They form a network linking the inner and outer membranes and the peptidoglycan layer.

It is found in the periplasm. In terms of biological role, part of the Tol-Pal system, which plays a role in outer membrane invagination during cell division and is important for maintaining outer membrane integrity. The protein is Tol-Pal system protein TolB of Legionella pneumophila (strain Corby).